The primary structure comprises 77 residues: Large ribosomal subunit protein bL28 (77 aa).

This sequence belongs to the bacterial ribosomal protein bL28 family.

The polypeptide is Large ribosomal subunit protein bL28 (Verminephrobacter eiseniae (strain EF01-2)).